Consider the following 237-residue polypeptide: Octanoyltransferase (237 aa).

Positions 27 to 210 constitute a BPL/LPL catalytic domain; it reads SGGDDILLLL…EFYHIFQPAG (184 aa). Substrate-binding positions include 72 to 79, 139 to 141, and 152 to 154; these read RGGNVTCH, SLG, and GMA. The Acyl-thioester intermediate role is filled by C170.

The protein belongs to the LipB family.

It is found in the cytoplasm. The enzyme catalyses octanoyl-[ACP] + L-lysyl-[protein] = N(6)-octanoyl-L-lysyl-[protein] + holo-[ACP] + H(+). Its pathway is protein modification; protein lipoylation via endogenous pathway; protein N(6)-(lipoyl)lysine from octanoyl-[acyl-carrier-protein]: step 1/2. Functionally, catalyzes the transfer of endogenously produced octanoic acid from octanoyl-acyl-carrier-protein onto the lipoyl domains of lipoate-dependent enzymes. Lipoyl-ACP can also act as a substrate although octanoyl-ACP is likely to be the physiological substrate. The sequence is that of Octanoyltransferase from Desulfovibrio desulfuricans (strain ATCC 27774 / DSM 6949 / MB).